The following is a 213-amino-acid chain: Pyridoxine/pyridoxamine 5'-phosphate oxidase (213 aa).

Substrate is bound by residues 8–11 (RREY) and lysine 66. Residues 61 to 66 (RIVLLK), 76 to 77 (YT), arginine 82, lysine 83, and glutamine 105 contribute to the FMN site. Substrate-binding residues include tyrosine 123, arginine 127, and serine 131. Residues 140 to 141 (QS) and tryptophan 185 contribute to the FMN site. Position 191–193 (191–193 (RLH)) interacts with substrate. Arginine 195 provides a ligand contact to FMN.

This sequence belongs to the pyridoxamine 5'-phosphate oxidase family. Homodimer. FMN is required as a cofactor.

It carries out the reaction pyridoxamine 5'-phosphate + O2 + H2O = pyridoxal 5'-phosphate + H2O2 + NH4(+). The enzyme catalyses pyridoxine 5'-phosphate + O2 = pyridoxal 5'-phosphate + H2O2. The protein operates within cofactor metabolism; pyridoxal 5'-phosphate salvage; pyridoxal 5'-phosphate from pyridoxamine 5'-phosphate: step 1/1. It functions in the pathway cofactor metabolism; pyridoxal 5'-phosphate salvage; pyridoxal 5'-phosphate from pyridoxine 5'-phosphate: step 1/1. Functionally, catalyzes the oxidation of either pyridoxine 5'-phosphate (PNP) or pyridoxamine 5'-phosphate (PMP) into pyridoxal 5'-phosphate (PLP). The polypeptide is Pyridoxine/pyridoxamine 5'-phosphate oxidase (Pseudoalteromonas atlantica (strain T6c / ATCC BAA-1087)).